Reading from the N-terminus, the 570-residue chain is Glutamate--tRNA ligase (570 aa).

A 'HIGH' region motif is present at residues 107–117 (PNPDFVLHLGS).

The protein belongs to the class-I aminoacyl-tRNA synthetase family. Glutamate--tRNA ligase type 2 subfamily.

The protein resides in the cytoplasm. It carries out the reaction tRNA(Glu) + L-glutamate + ATP = L-glutamyl-tRNA(Glu) + AMP + diphosphate. Catalyzes the attachment of glutamate to tRNA(Glu) in a two-step reaction: glutamate is first activated by ATP to form Glu-AMP and then transferred to the acceptor end of tRNA(Glu). This Pyrobaculum aerophilum (strain ATCC 51768 / DSM 7523 / JCM 9630 / CIP 104966 / NBRC 100827 / IM2) protein is Glutamate--tRNA ligase.